An 82-amino-acid polypeptide reads, in one-letter code: Escargot/snail protein homolog (82 aa).

4 C2H2-type zinc fingers span residues 1-5 (HLQFH), 18-40 (FSCKLCDKVYTSLGALKMHIRTH), 44-66 (CKCDICHKAFSRPWLLQGHIRTH), and 72-82 (FSCQHCHRAFA).

It belongs to the snail C2H2-type zinc-finger protein family.

It is found in the nucleus. This chain is Escargot/snail protein homolog, found in Bradysia coprophila (Dark-winged fungus gnat).